A 199-amino-acid polypeptide reads, in one-letter code: MTNTPQTPPKERANGVIVGACLAFVAGMVGMAYAAVPLYDMFCRVTGYNGTTQRVEQASDVILDEKIKVTFDANVGPGLAWDFKPVQRDIDVRIGETVQVMYRAKNLSSKPATGQATFNVTPMAAGAYFNKVQCFCFTETTLQPGEEMEMPVVFFVDPEIVKPVETKDIKTLTLSYTFYPREPSKPIAAVKDGETENRL.

Over 1–12 the chain is Cytoplasmic; the sequence is MTNTPQTPPKER. The helical; Signal-anchor for type II membrane protein transmembrane segment at 13 to 35 threads the bilayer; the sequence is ANGVIVGACLAFVAGMVGMAYAA. Residues 36–199 are Periplasmic-facing; the sequence is VPLYDMFCRV…VKDGETENRL (164 aa).

The protein belongs to the COX11/CtaG family.

The protein localises to the cell inner membrane. In terms of biological role, exerts its effect at some terminal stage of cytochrome c oxidase synthesis, probably by being involved in the insertion of the copper B into subunit I. This is Cytochrome c oxidase assembly protein CtaG from Sinorhizobium fredii (strain NBRC 101917 / NGR234).